A 173-amino-acid polypeptide reads, in one-letter code: Pyrimidine operon regulatory protein (173 aa).

Residues 40–41 (TR), 97–105 (DDVLYTGRT), and Arg-130 each bind substrate. Residues 93-105 (VILVDDVLYTGRT) carry the PRPP-binding motif.

Belongs to the purine/pyrimidine phosphoribosyltransferase family. PyrR subfamily.

In terms of biological role, regulates transcriptional attenuation of the pyrimidine nucleotide (pyr) operon in response to exogenous pyrimidines, probably by binding to specific sites on pyr mRNA. This probably disrupts an antiterminator hairpin in the RNA and favors formation of a downstream transcription terminator, leading to a reduced expression of downstream genes. This is Pyrimidine operon regulatory protein from Lactococcus lactis subsp. lactis (strain IL1403) (Streptococcus lactis).